A 5207-amino-acid polypeptide reads, in one-letter code: E3 ubiquitin-protein ligase RNF213 (5207 aa).

2 disordered regions span residues 1–20 (MECPSCQHVSKEETPKFCSQ) and 27–365 (PAAP…EADV). Over residues 34–43 (SENNNSTMAS) the composition is skewed to polar residues. The segment covering 89–100 (KKKKRKKKKKGN) has biased composition (basic residues). 2 stretches are compositionally biased toward low complexity: residues 101 to 117 (KSASSELASLPLSPASP) and 136 to 157 (SQAQQSGPTGQPSQPPGTATTP). A compositionally biased stretch (polar residues) spans 188–197 (SEAQSSPQFQ). Residues serine 208 and serine 217 each carry the phosphoserine modification. The span at 248–266 (GGSSEPGTELQTTEQQAGA) shows a compositional bias: polar residues. Basic and acidic residues-rich tracts occupy residues 285–294 (AGKEMKEKTQ), 309–346 (HCQEAETKTKDEMAAAEEKVGKNEQGEPEDLKKPEGKN), and 353–362 (KNEKEQKNQE). A coiled-coil region spans residues 343-374 (EGKNRSAAAVKNEKEQKNQEADVQEVKASTLS). Residue lysine 1151 forms a Glycyl lysine isopeptide (Lys-Gly) (interchain with G-Cter in SUMO2) linkage. Serine 1258 is modified (phosphoserine). Residues 1995 to 2000 (GVGKSL), glutamate 2098, aspartate 2155, and arginine 2216 contribute to the ATP site. Residue serine 2273 is modified to Phosphoserine. Residues lysine 2499 and serine 2574 each coordinate ATP. Residues cysteine 3997, cysteine 4000, cysteine 4012, histidine 4014, cysteine 4017, cysteine 4020, cysteine 4032, cysteine 4035, cysteine 4505, and histidine 4509 each contribute to the Zn(2+) site. The segment at 3997-4036 (CSICLGDAKDPVCLPCDHVHCLRCLRAWFASEQMICPYCL) adopts an RING-type zinc-finger fold. The segment at 4483-4555 (MPEDLLAQAR…VKDKADRTQT (73 aa)) adopts an RZ-type zinc-finger fold. Cysteine 4516 (nucleophile; for E3 ubiquitin-lipopolysaccharide ligase activity) is an active-site residue. The Zn(2+) site is built by cysteine 4525 and cysteine 4528.

The protein belongs to the AAA ATPase family. In terms of assembly, monomer. Interacts with UBE2L3/UBCH7; UBE2L3/UBCH7 is the most efficient ubiquitin-conjugating enzyme E2 for the ubiquitin ligase activity. Interacts with UBE2N/UBC13; promoting 'Lys-63'-linked ubiquitination of target proteins. As to quaternary structure, (Microbial infection) Interacts with M.tuberculosis protein Rv3655c, which impairs caspase-8 activation and suppresses macrophage apoptosis by blocking the extrinsic pathway. Autoubiquitinated. In terms of tissue distribution, widely expressed (at protein level). Major isoform detected in all tissues examined. As to expression, minor isoform with restricted expression.

The protein localises to the cytoplasm. It is found in the cytosol. The protein resides in the lipid droplet. The enzyme catalyses S-ubiquitinyl-[E2 ubiquitin-conjugating enzyme]-L-cysteine + [acceptor protein]-L-lysine = [E2 ubiquitin-conjugating enzyme]-L-cysteine + N(6)-ubiquitinyl-[acceptor protein]-L-lysine.. It catalyses the reaction ATP + H2O = ADP + phosphate + H(+). The protein operates within protein modification; protein ubiquitination. Its function is as follows. Atypical E3 ubiquitin ligase that can catalyze ubiquitination of both proteins and lipids, and which is involved in various processes, such as lipid metabolism, angiogenesis and cell-autonomous immunity. Acts as a key immune sensor by catalyzing ubiquitination of the lipid A moiety of bacterial lipopolysaccharide (LPS) via its RZ-type zinc-finger: restricts the proliferation of cytosolic bacteria, such as Salmonella, by generating the bacterial ubiquitin coat through the ubiquitination of LPS. Also acts indirectly by mediating the recruitment of the LUBAC complex, which conjugates linear polyubiquitin chains. Ubiquitination of LPS triggers cell-autonomous immunity, such as antibacterial autophagy, leading to degradation of the microbial invader. Involved in lipid metabolism by regulating fat storage and lipid droplet formation; act by inhibiting the lipolytic process. Also regulates lipotoxicity by inhibiting desaturation of fatty acids. Also acts as an E3 ubiquitin-protein ligase via its RING-type zinc finger: mediates 'Lys-63'-linked ubiquitination of target proteins. Involved in the non-canonical Wnt signaling pathway in vascular development: acts by mediating ubiquitination and degradation of FLNA and NFATC2 downstream of RSPO3, leading to inhibit the non-canonical Wnt signaling pathway and promoting vessel regression. Also has ATPase activity; ATPase activity is required for ubiquitination of LPS. This chain is E3 ubiquitin-protein ligase RNF213, found in Homo sapiens (Human).